An 896-amino-acid polypeptide reads, in one-letter code: Alanine--tRNA ligase (896 aa).

Residues 439-456 (QRAKDDAKAKKGQHRDAS) show a composition bias toward basic and acidic residues. The segment at 439–459 (QRAKDDAKAKKGQHRDASAYR) is disordered. Zn(2+) contacts are provided by histidine 579, histidine 583, cysteine 681, and histidine 685.

Belongs to the class-II aminoacyl-tRNA synthetase family. The cofactor is Zn(2+).

Its subcellular location is the cytoplasm. It carries out the reaction tRNA(Ala) + L-alanine + ATP = L-alanyl-tRNA(Ala) + AMP + diphosphate. In terms of biological role, catalyzes the attachment of alanine to tRNA(Ala) in a two-step reaction: alanine is first activated by ATP to form Ala-AMP and then transferred to the acceptor end of tRNA(Ala). Also edits incorrectly charged Ser-tRNA(Ala) and Gly-tRNA(Ala) via its editing domain. The protein is Alanine--tRNA ligase of Nocardioides sp. (strain ATCC BAA-499 / JS614).